Here is a 142-residue protein sequence, read N- to C-terminus: Hemoglobin subunit alpha-1/2 (142 aa).

One can recognise a Globin domain in the interval 2-142; that stretch reads VLSPADKTNI…VSTVLTSKYR (141 aa). Position 4 is a phosphoserine (Ser4). N6-succinyllysine is present on Lys8. Thr9 is subject to Phosphothreonine. Position 12 is an N6-succinyllysine (Lys12). Lys17 bears the N6-acetyllysine; alternate mark. Lys17 carries the N6-succinyllysine; alternate modification. Tyr25 is modified (phosphotyrosine). Lys41 carries the post-translational modification N6-succinyllysine. His59 is an O2 binding site. His88 is a binding site for heme b. Position 103 is a phosphoserine (Ser103). A Phosphothreonine modification is found at Thr109. Ser125 carries the post-translational modification Phosphoserine. A phosphothreonine mark is found at Thr135 and Thr138. Ser139 is modified (phosphoserine).

This sequence belongs to the globin family. In terms of assembly, heterotetramer of two alpha chains and two beta chains. Red blood cells.

Functionally, involved in oxygen transport from the lung to the various peripheral tissues. In Oryctolagus cuniculus (Rabbit), this protein is Hemoglobin subunit alpha-1/2.